A 148-amino-acid chain; its full sequence is General odorant-binding protein 69a (148 aa).

Positions 1–23 (MVARHFSFFLALLILYDLIPSNQ) are cleaved as a signal peptide. 3 disulfide bridges follow: cysteine 42–cysteine 74, cysteine 70–cysteine 121, and cysteine 112–cysteine 130.

The protein belongs to the PBP/GOBP family. Expressed in the antenna, mostly on the anterior surface of the third antennal segment. Expressed in auxiliary cells and the third antennal segment and exported to the sensillar lymph (at protein level).

Its subcellular location is the secreted. Odorant-binding protein required for olfactory behavior and activity of pheromone-sensitive neurons in response to the male-specific pheromone cis-vaccenyl acetate (cVA). Modulates social responsivity differently in males and females, regulating male aggression and female receptivity respectively. The sequence is that of General odorant-binding protein 69a (Obp69a) from Drosophila melanogaster (Fruit fly).